A 438-amino-acid chain; its full sequence is Exodeoxyribonuclease 7 large subunit (438 aa).

The interval 405 to 438 (GATSTGPTDDIPSSAARLPSSPAPDARPASGAES) is disordered.

Belongs to the XseA family. Heterooligomer composed of large and small subunits.

Its subcellular location is the cytoplasm. The catalysed reaction is Exonucleolytic cleavage in either 5'- to 3'- or 3'- to 5'-direction to yield nucleoside 5'-phosphates.. In terms of biological role, bidirectionally degrades single-stranded DNA into large acid-insoluble oligonucleotides, which are then degraded further into small acid-soluble oligonucleotides. The polypeptide is Exodeoxyribonuclease 7 large subunit (Clavibacter michiganensis subsp. michiganensis (strain NCPPB 382)).